Reading from the N-terminus, the 113-residue chain is Small ribosomal subunit protein uS17 (113 aa).

It belongs to the universal ribosomal protein uS17 family. As to quaternary structure, part of the 30S ribosomal subunit.

Its function is as follows. One of the primary rRNA binding proteins, it binds specifically to the 5'-end of 16S ribosomal RNA. In Sulfurisphaera tokodaii (strain DSM 16993 / JCM 10545 / NBRC 100140 / 7) (Sulfolobus tokodaii), this protein is Small ribosomal subunit protein uS17.